A 394-amino-acid chain; its full sequence is Elongation factor Tu 1 (394 aa).

A tr-type G domain is found at 10–204; the sequence is KPHVNVGTIG…YLDSYIPEPE (195 aa). Residues 19-26 are G1; the sequence is GHVDHGKT. Residue 19 to 26 participates in GTP binding; that stretch reads GHVDHGKT. Residue Thr26 participates in Mg(2+) binding. The G2 stretch occupies residues 60–64; it reads GITIN. Positions 81–84 are G3; that stretch reads DCPG. GTP is bound by residues 81 to 85 and 136 to 139; these read DCPGH and NKCD. Residues 136-139 are G4; it reads NKCD. Positions 174–176 are G5; the sequence is SAL.

It belongs to the TRAFAC class translation factor GTPase superfamily. Classic translation factor GTPase family. EF-Tu/EF-1A subfamily. Monomer.

Its subcellular location is the cytoplasm. The enzyme catalyses GTP + H2O = GDP + phosphate + H(+). Functionally, GTP hydrolase that promotes the GTP-dependent binding of aminoacyl-tRNA to the A-site of ribosomes during protein biosynthesis. This is Elongation factor Tu 1 from Serratia proteamaculans (strain 568).